The chain runs to 2198 residues: RNA-directed RNA polymerase L (2198 aa).

Residues 26-284 form an endonuclease region; it reads KEALLSQVEV…AHSDSLAPEC (259 aa). Positions 51, 89, and 102 each coordinate Mn(2+). The active site involves Lys115. In terms of domain architecture, RdRp catalytic spans 1161–1359; it reads CDMKMAVNNG…FLSSKFNKFV (199 aa). Position 1319 (Asp1319) interacts with Mg(2+).

The protein belongs to the Bunyavirales RNA polymerase family. Homomultimer; the oligomeric structure is essential for the polymerase activity. Interacts with nucleoprotein N. Interacts with protein Z; this interaction inhibits viral transcription and replication, Z partially blocks the product exit tunnel for the releasing nascent RNA product. Mn(2+) serves as cofactor. The cofactor is Mg(2+).

Its subcellular location is the virion. The protein resides in the host cytoplasm. The enzyme catalyses RNA(n) + a ribonucleoside 5'-triphosphate = RNA(n+1) + diphosphate. In terms of biological role, RNA-dependent RNA polymerase, which is responsible for the replication and transcription of the viral RNA genome using antigenomic RNA as an intermediate. During transcription, synthesizes subgenomic RNAs and assures their capping by a cap-snatching mechanism, which involves the endonuclease activity cleaving the host capped pre-mRNAs. These short capped RNAs are then used as primers for viral transcription. The 3'-end of subgenomic mRNAs molecules are heterogeneous and not polyadenylated. The replicase function is to direct synthesis of antigenomic and genomic RNA which are encapsidated and non capped. As a consequence of the use of the same enzyme for both transcription and replication, these mechanisms need to be well coordinated. These processes may be regulated by proteins N and Z in a dose-dependent manner. Z protein inhibits the viral polymerase L und thus the viral transcription and RNA synthesis. The chain is RNA-directed RNA polymerase L from Homo sapiens (Human).